A 119-amino-acid chain; its full sequence is Phosphoribosyl-AMP cyclohydrolase (119 aa).

Asp-78 is a binding site for Mg(2+). Zn(2+) is bound at residue Cys-79. 2 residues coordinate Mg(2+): Asp-80 and Asp-82. Positions 95 and 102 each coordinate Zn(2+).

The protein belongs to the PRA-CH family. In terms of assembly, homodimer. The cofactor is Mg(2+). It depends on Zn(2+) as a cofactor.

It is found in the cytoplasm. The enzyme catalyses 1-(5-phospho-beta-D-ribosyl)-5'-AMP + H2O = 1-(5-phospho-beta-D-ribosyl)-5-[(5-phospho-beta-D-ribosylamino)methylideneamino]imidazole-4-carboxamide. It participates in amino-acid biosynthesis; L-histidine biosynthesis; L-histidine from 5-phospho-alpha-D-ribose 1-diphosphate: step 3/9. In terms of biological role, catalyzes the hydrolysis of the adenine ring of phosphoribosyl-AMP. This Jannaschia sp. (strain CCS1) protein is Phosphoribosyl-AMP cyclohydrolase.